We begin with the raw amino-acid sequence, 241 residues long: Proteasome subunit beta type-1 (241 aa).

Met-1 is modified (N-acetylmethionine). A propeptide spanning residues 1 to 28 (MLSSTAMYSAPGRDLGMEPHRAAGPLQL) is cleaved from the precursor. Ser-58 carries O-linked (GlcNAc) serine glycosylation. Ser-62 and Ser-68 each carry phosphoserine. Tyr-150 carries the phosphotyrosine modification. Ser-162 is subject to Phosphoserine. At Lys-204 the chain carries N6-acetyllysine. O-linked (GlcNAc) serine glycosylation is present at Ser-209.

It belongs to the peptidase T1B family. As to quaternary structure, the 26S proteasome consists of a 20S proteasome core and two 19S regulatory subunits. The 20S proteasome core is a barrel-shaped complex made of 28 subunits that are arranged in four stacked rings. The two outer rings are each formed by seven alpha subunits, and the two inner rings are formed by seven beta subunits. The proteolytic activity is exerted by three beta-subunits PSMB5, PSMB6 and PSMB7. Interacts with SERPINB2. Interacts with RFPL4A. In terms of assembly, (Microbial infection) Interacts with HIV-1 protein Tat.

The protein resides in the cytoplasm. The protein localises to the nucleus. Non-catalytic component of the 20S core proteasome complex involved in the proteolytic degradation of most intracellular proteins. This complex plays numerous essential roles within the cell by associating with different regulatory particles. Associated with two 19S regulatory particles, forms the 26S proteasome and thus participates in the ATP-dependent degradation of ubiquitinated proteins. The 26S proteasome plays a key role in the maintenance of protein homeostasis by removing misfolded or damaged proteins that could impair cellular functions, and by removing proteins whose functions are no longer required. Associated with the PA200 or PA28, the 20S proteasome mediates ubiquitin-independent protein degradation. This type of proteolysis is required in several pathways including spermatogenesis (20S-PA200 complex) or generation of a subset of MHC class I-presented antigenic peptides (20S-PA28 complex). The chain is Proteasome subunit beta type-1 from Homo sapiens (Human).